Consider the following 309-residue polypeptide: MEKVLVFGHKNPDTDAICSAIAYAELKKELGMNAEPVRLGEISGETQFALDYFKVEGPRFVETVANEVDNVILVDHNERQQSANDIESVRVLEVIDHHRIANFETSDPIYYRCEPVGCTATILNKMYKENGITIRKEVAGLMLSAIISDSLLFKSPTCTEQDVAAARELAEIAGVDADNYGLEMLKAGADLSGKTMEQLISLDAKEFQMGNAKVEIAQVNAVDTNDVLVHQAELEKVISAVVEEKGLDLFLFVVTDILTNDSVGLAIGNAANVVEKAYNVSLENNTATLKGVVSRKKQIVPVLTEAFQA.

His-9, Asp-13, Asp-15, Asp-75, His-97, and Asp-149 together coordinate Mn(2+).

This sequence belongs to the PPase class C family. Mn(2+) serves as cofactor.

It is found in the cytoplasm. The catalysed reaction is diphosphate + H2O = 2 phosphate + H(+). The polypeptide is Probable manganese-dependent inorganic pyrophosphatase (Bacillus cereus (strain ATCC 10987 / NRS 248)).